The following is a 314-amino-acid chain: Formylglycine-generating enzyme (314 aa).

Low complexity predominate over residues 1–20; sequence MAVAAPSPAAAAEPGPAARP. Residues 1 to 31 are disordered; it reads MAVAAPSPAAAAEPGPAARPRSTRGQVRLPG. The Ca(2+) site is built by Asn194, Ile195, Asp208, and His210. Residues Cys272 and Cys277 each contribute to the Cu(2+) site.

This sequence belongs to the sulfatase-modifying factor family. Cu(2+) serves as cofactor.

The catalysed reaction is L-cysteinyl-[sulfatase] + 2 a thiol + O2 = an organic disulfide + 3-oxo-L-alanyl-[sulfatase] + hydrogen sulfide + H2O + H(+). Its pathway is protein modification; sulfatase oxidation. Oxidase that catalyzes the conversion of cysteine to 3-oxoalanine on target proteins. 3-oxoalanine modification, which is also named formylglycine (fGly), occurs in the maturation of arylsulfatases and some alkaline phosphatases that use the hydrated form of 3-oxoalanine as a catalytic nucleophile. This chain is Formylglycine-generating enzyme, found in Streptomyces coelicolor (strain ATCC BAA-471 / A3(2) / M145).